A 265-amino-acid polypeptide reads, in one-letter code: Chlorophyll a-b binding protein 1A, chloroplastic (265 aa).

A chloroplast-targeting transit peptide spans 1–34; it reads MAAAAMALSSPSFAGQAVKLSPSASENSGNGRIT. The chain crosses the membrane as a helical span at residues 151–171; that stretch reads LVHAQSILAIWACQVVLMGAV. Chlorophyll b-binding residues include valine 152, serine 156, glutamine 164, glutamate 172, arginine 175, and leucine 181. Lysine 212, glutamate 213, asparagine 216, arginine 218, glutamine 230, histidine 245, and alanine 254 together coordinate chlorophyll a. Residues 219–239 form a helical membrane-spanning segment; the sequence is LAMFSMFGFFVQAIVTGKGPL. Position 261 (phenylalanine 261) interacts with chlorophyll b.

It belongs to the light-harvesting chlorophyll a/b-binding (LHC) protein family. The LHC complex consists of chlorophyll a-b binding proteins. The cofactor is Binds at least 14 chlorophylls (8 Chl-a and 6 Chl-b) and carotenoids such as lutein and neoxanthin.. Photoregulated by reversible phosphorylation of its threonine residues.

It is found in the plastid. The protein resides in the chloroplast thylakoid membrane. Its function is as follows. The light-harvesting complex (LHC) functions as a light receptor, it captures and delivers excitation energy to photosystems with which it is closely associated. This is Chlorophyll a-b binding protein 1A, chloroplastic (CAB1A) from Solanum lycopersicum (Tomato).